A 347-amino-acid polypeptide reads, in one-letter code: UPF0283 membrane protein ECA1987 (347 aa).

Residues 1 to 11 show a composition bias toward basic and acidic residues; that stretch reads MNEPLKPRVTF. The disordered stretch occupies residues 1-48; the sequence is MNEPLKPRVTFDDVSPQEPQPQLRAGLAFDEQSSTPFSPISREEEVPE. The next 3 helical transmembrane spans lie at 70–90, 99–119, and 213–233; these read MVMAGVALFGISALAQGVQSL, WIALGGITAGSLIVAAGVGSL, and ESTLMIAVSPLALVDMAFIAW.

The protein belongs to the UPF0283 family.

The protein localises to the cell inner membrane. In Pectobacterium atrosepticum (strain SCRI 1043 / ATCC BAA-672) (Erwinia carotovora subsp. atroseptica), this protein is UPF0283 membrane protein ECA1987.